We begin with the raw amino-acid sequence, 92 residues long: Small ribosomal subunit protein uS19c (92 aa).

It belongs to the universal ribosomal protein uS19 family.

It is found in the plastid. The protein localises to the chloroplast. In terms of biological role, protein S19 forms a complex with S13 that binds strongly to the 16S ribosomal RNA. The chain is Small ribosomal subunit protein uS19c (rps19) from Picea abies (Norway spruce).